The following is a 527-amino-acid chain: Estrogen receptor beta (527 aa).

Positions 1–145 are modulating; it reads MDVKNSPSSL…SPSSKRDAHF (145 aa). Phosphoserine; by MAPK is present on residues Ser-84 and Ser-102. 2 NR C4-type zinc fingers span residues 146–166 and 182–206; these read CAVC…CEGC and CPAT…LRKC. Residues 146–211 constitute a DNA-binding region (nuclear receptor); it reads CAVCSDYASG…RLRKCYEVGM (66 aa). The region spanning 261 to 495 is the NR LBD domain; it reads SPEQLVLTLL…DLLLEMLNAH (235 aa).

It belongs to the nuclear hormone receptor family. NR3 subfamily. Binds DNA as a homodimer. Can form a heterodimer with ESR1. Interacts with NCOA1, NCOA3, NCOA5 and NCOA6 coactivators, leading to a strong increase of transcription of target genes. Interacts with UBE1C and AKAP13. Interacts with DNTTIP2. Interacts with CCDC62 in the presence of estradiol/E2; this interaction seems to enhance the transcription of target genes. Interacts with DNAAF4. Interacts with PRMT2. Interacts with CCAR2 (via N-terminus) in a ligand-independent manner. Interacts with RBM39, in the presence of estradiol (E2). Interacts with STUB1/CHIP. In terms of processing, phosphorylation at Ser-84 and Ser-102 recruits NCOA1. In terms of tissue distribution, present in granulosa cells of antral follicles in various stages of follicular growth.

It localises to the nucleus. Its function is as follows. Nuclear hormone receptor. Binds estrogens with an affinity similar to that of ESR1ESR1/ER-alpha, and activates expression of reporter genes containing estrogen response elements (ERE) in an estrogen-dependent manner. The chain is Estrogen receptor beta (ESR2) from Bos taurus (Bovine).